We begin with the raw amino-acid sequence, 327 residues long: Acetyl-coenzyme A carboxylase carboxyl transferase subunit beta (327 aa).

The 270-residue stretch at 24-293 folds into the CoA carboxyltransferase N-terminal domain; that stretch reads LWIKCPDTGQ…LTVTTAVEAP (270 aa). Low complexity predominate over residues 293–311; it reads PAEAAAKAEPEATTTEQPV. A disordered region spans residues 293 to 327; sequence PAEAAAKAEPEATTTEQPVAPAPTEPPAQPAAPQA. Pro residues predominate over residues 312–327; that stretch reads APAPTEPPAQPAAPQA.

The protein belongs to the AccD/PCCB family. As to quaternary structure, acetyl-CoA carboxylase is a heterohexamer composed of biotin carboxyl carrier protein (AccB), biotin carboxylase (AccC) and two subunits each of ACCase subunit alpha (AccA) and ACCase subunit beta (AccD).

It is found in the cytoplasm. It carries out the reaction N(6)-carboxybiotinyl-L-lysyl-[protein] + acetyl-CoA = N(6)-biotinyl-L-lysyl-[protein] + malonyl-CoA. Its pathway is lipid metabolism; malonyl-CoA biosynthesis; malonyl-CoA from acetyl-CoA: step 1/1. Its function is as follows. Component of the acetyl coenzyme A carboxylase (ACC) complex. Biotin carboxylase (BC) catalyzes the carboxylation of biotin on its carrier protein (BCCP) and then the CO(2) group is transferred by the transcarboxylase to acetyl-CoA to form malonyl-CoA. The chain is Acetyl-coenzyme A carboxylase carboxyl transferase subunit beta from Rhodopseudomonas palustris (strain TIE-1).